A 553-amino-acid polypeptide reads, in one-letter code: tRNA pseudouridine synthase 1 (553 aa).

Residues 1-78 (MSEEQNLRPV…ETRSKDKDES (78 aa)) are disordered. Composition is skewed to basic and acidic residues over residues 33 to 51 (RKADYEDGENSEKRQKPND) and 64 to 78 (SNEKKETRSKDKDES). The Nucleophile role is filled by Asp-158. The disordered stretch occupies residues 517–539 (DLEQKAPSDPTPSDEKGKKPQRP).

Belongs to the tRNA pseudouridine synthase TruA family. The cofactor is Zn(2+).

Its subcellular location is the nucleus. It catalyses the reaction a uridine in tRNA = a pseudouridine in tRNA. The enzyme catalyses uridine in snRNA = pseudouridine in snRNA. The catalysed reaction is a uridine in mRNA = a pseudouridine in mRNA. Formation of pseudouridine at positions 27 and 28 in the anticodon stem and loop of transfer RNAs; at positions 34 and 36 of intron-containing precursor tRNA(Ile) and at position 35 in the intron-containing tRNA(Tyr). Catalyzes pseudouridylation at position 44 in U2 snRNA. Also catalyzes pseudouridylation of mRNAs. The polypeptide is tRNA pseudouridine synthase 1 (PUS1) (Kluyveromyces lactis (strain ATCC 8585 / CBS 2359 / DSM 70799 / NBRC 1267 / NRRL Y-1140 / WM37) (Yeast)).